The sequence spans 465 residues: Iron-sulfur cluster assembly SufBD family protein SSP1857 (465 aa).

Belongs to the iron-sulfur cluster assembly SufBD family.

This Staphylococcus saprophyticus subsp. saprophyticus (strain ATCC 15305 / DSM 20229 / NCIMB 8711 / NCTC 7292 / S-41) protein is Iron-sulfur cluster assembly SufBD family protein SSP1857.